Here is a 286-residue protein sequence, read N- to C-terminus: Bifunctional protein FolD (286 aa).

Residues G165–S167, S190, and V231 contribute to the NADP(+) site.

Belongs to the tetrahydrofolate dehydrogenase/cyclohydrolase family. Homodimer.

The catalysed reaction is (6R)-5,10-methylene-5,6,7,8-tetrahydrofolate + NADP(+) = (6R)-5,10-methenyltetrahydrofolate + NADPH. The enzyme catalyses (6R)-5,10-methenyltetrahydrofolate + H2O = (6R)-10-formyltetrahydrofolate + H(+). Its pathway is one-carbon metabolism; tetrahydrofolate interconversion. Functionally, catalyzes the oxidation of 5,10-methylenetetrahydrofolate to 5,10-methenyltetrahydrofolate and then the hydrolysis of 5,10-methenyltetrahydrofolate to 10-formyltetrahydrofolate. This Bacillus thuringiensis (strain Al Hakam) protein is Bifunctional protein FolD.